The sequence spans 395 residues: Acetate kinase (395 aa).

Asn7 is a binding site for Mg(2+). Residue Lys14 participates in ATP binding. Residue Arg85 participates in substrate binding. Asp142 (proton donor/acceptor) is an active-site residue. ATP contacts are provided by residues 202–206, 277–279, and 325–329; these read HLGNG, DMR, and GIGEN. Glu378 contacts Mg(2+).

Belongs to the acetokinase family. As to quaternary structure, homodimer. The cofactor is Mg(2+). Mn(2+) is required as a cofactor.

It is found in the cytoplasm. It catalyses the reaction acetate + ATP = acetyl phosphate + ADP. It participates in metabolic intermediate biosynthesis; acetyl-CoA biosynthesis; acetyl-CoA from acetate: step 1/2. Functionally, catalyzes the formation of acetyl phosphate from acetate and ATP. Can also catalyze the reverse reaction. The chain is Acetate kinase from Deinococcus geothermalis (strain DSM 11300 / CIP 105573 / AG-3a).